A 73-amino-acid chain; its full sequence is Large ribosomal subunit protein bL31 (73 aa).

Residues Cys-16, Cys-18, Cys-36, and Cys-39 each coordinate Zn(2+).

It belongs to the bacterial ribosomal protein bL31 family. Type A subfamily. In terms of assembly, part of the 50S ribosomal subunit. Zn(2+) is required as a cofactor.

Its function is as follows. Binds the 23S rRNA. This is Large ribosomal subunit protein bL31 from Desulfotalea psychrophila (strain LSv54 / DSM 12343).